The primary structure comprises 435 residues: Putrescine transporter PotE (435 aa).

Transmembrane regions (helical) follow at residues 8-28 (IGVV…GIIM), 39-59 (ISIV…YAFA), 95-115 (LVIA…ELFG), 117-137 (ILSP…ATVL), 148-168 (ISSF…IIGW), 185-205 (VPTF…FLGL), 224-244 (IAVL…TNVI), 275-295 (VIMG…QFTI), 320-340 (APVV…LMTI), 354-374 (LAVV…AVLL), 386-406 (TTVF…YAAG), and 409-429 (AMLY…FVSY).

It belongs to the amino acid-polyamine-organocation (APC) superfamily. Basic amino acid/polyamine antiporter (APA) (TC 2.A.3.2) family.

Its subcellular location is the cell inner membrane. The enzyme catalyses putrescine(in) + H(+)(in) = putrescine(out) + H(+)(out). The catalysed reaction is putrescine(in) + L-ornithine(out) = putrescine(out) + L-ornithine(in). Catalyzes both the uptake and excretion of putrescine. The uptake of putrescine is dependent on the membrane potential and the excretion involves putrescine-ornithine antiporter activity. The sequence is that of Putrescine transporter PotE from Haemophilus influenzae (strain ATCC 51907 / DSM 11121 / KW20 / Rd).